Here is a 461-residue protein sequence, read N- to C-terminus: tRNA modification GTPase MnmE (461 aa).

Residues arginine 23, glutamate 88, and arginine 127 each coordinate (6S)-5-formyl-5,6,7,8-tetrahydrofolate. The TrmE-type G domain maps to 223–382 (GLNTVIVGKP…VEEALVEIVY (160 aa)). A K(+)-binding site is contributed by asparagine 233. Residues 233-238 (NVGKSS), 252-258 (TEVPGTT), and 277-280 (DTAG) contribute to the GTP site. Serine 237 is a binding site for Mg(2+). K(+)-binding residues include threonine 252, valine 254, and threonine 257. Threonine 258 serves as a coordination point for Mg(2+). Lysine 461 is a (6S)-5-formyl-5,6,7,8-tetrahydrofolate binding site.

This sequence belongs to the TRAFAC class TrmE-Era-EngA-EngB-Septin-like GTPase superfamily. TrmE GTPase family. As to quaternary structure, homodimer. Heterotetramer of two MnmE and two MnmG subunits. Requires K(+) as cofactor.

Its subcellular location is the cytoplasm. Functionally, exhibits a very high intrinsic GTPase hydrolysis rate. Involved in the addition of a carboxymethylaminomethyl (cmnm) group at the wobble position (U34) of certain tRNAs, forming tRNA-cmnm(5)s(2)U34. This chain is tRNA modification GTPase MnmE, found in Alkaliphilus metalliredigens (strain QYMF).